A 277-amino-acid polypeptide reads, in one-letter code: General transcription factor IIF subunit 2 (277 aa).

The protein belongs to the TFIIF beta subunit family. Heterodimer of an alpha and a beta subunit.

The protein resides in the nucleus. In terms of biological role, TFIIF is a general transcription initiation factor that binds to RNA polymerase II and helps to recruit it to the initiation complex in collaboration with TFIIB. This Drosophila melanogaster (Fruit fly) protein is General transcription factor IIF subunit 2 (TfIIFbeta).